The chain runs to 958 residues: GPMGPSGPRGIPGPPGAPGPQGFGPPGEPGEPGASGPMGPRGPPGPPGKNGDDGEAGKPGRPGERGPPGPQGARGIPGTAGIPGMKGHRGFSGIDGAKGDAGPAGPKGEPGSPGENGAPGQMGPRGIPGERGRPGAPGPAGARGNDGATGAAGPPGPTGPAGPPGFPGAVGAKGEAGPQGARGSEGPQGVRGEPGPPGPAGAAGPAGNPGAGANGAPGIAGAPGFPGARGPSGPQGPSGPPGPKGNSGEPGAPGSKKGEPGPTGVQGPPGPAGEEGKRGARGEPGPTGIPGPPGERGGPGSRGFPGSDGVAGPKGPAGERGAPGPAGPKGSPGEAGRPGEAGIPGAKGITGSPGSPGPDGKTGPPGPAGQDGRPGPPGPPGARGQAGVMGFPGPKGAAGEPGKAGERGVPGPPGAVGPAGKDGEAGAQGPPGPAGPAGERGEPGPAGSPGFQGIPGPAGPPGESGKPGEVPGDIGAPGPSGARGERGFPGERGVQGPPGPAGPRGAGAAGIPGPKGDRGDAGPKGADGAPGKDGVRGITGPIGPPGPAGAPGDKGESGPSGPAGPTGARGAPGDRGEPGPPGPAGFAGPPGADGQPGAKGEPGDAGAKGDAGPAGPAGPTGPPGPIGNVGAPGPKGARGSAGPPGATGFPGAAGRVGPPGPAGNAGPPGPPGPVGKEGGKGPRGETGPAGRPGEVGPPGPPGPAGEKGSPGADGPAGAPGTPGPQGIAGQRGVVGIPGQRGERGFPGIPGPSGEPGKQGPSGASGERGPPGPVGPPGIAGPPGESGREGAPGAEGSPGRGDRGETGPAGPPGAPGAPGAPGPVGPAGKSGDRGETGPAGPAGPIGPVGARGPTGPQGPRGDKGETGEQGDRGIKGHRGFSGIQGPTGPPGAPGEQGPSGASGPAGPRGPPGSAGAPGKDGINGIPGPIGPPGPRGRTGDAGPVGPPGPPGPPGPPGPP.

A disordered region spans residues Gly1–Pro958. Residues Asn50 to Glu64 are compositionally biased toward basic and acidic residues. A Phosphoserine modification is found at Ser92. Low complexity-rich tracts occupy residues Asp100–Asn116 and Pro139–Ala152. A compositionally biased stretch (pro residues) spans Pro154–Phe166. A compositionally biased stretch (low complexity) spans Ala216–Ser232. Over residues Gly294–Gly303 the composition is skewed to gly residues. 8 stretches are compositionally biased toward low complexity: residues Phe304 to Ala335, Lys347 to Arg373, Ala382 to Pro401, Ser557 to Ala571, Ala584 to Ala614, Ser640 to Val656, Glu685 to Glu694, and Ala704 to Ala728. Ser560 is modified (phosphoserine). Pro residues-rich tracts occupy residues Pro769 to Ala779 and Ala808 to Val823. The segment covering Arg859 to Ile873 has biased composition (basic and acidic residues). The segment covering Pro892–Pro925 has biased composition (low complexity). Pro residues predominate over residues Val943 to Pro958.

It belongs to the fibrillar collagen family. In terms of assembly, trimers of one alpha 2(I) and two alpha 1(I) chains. In terms of processing, prolines at the third position of the tripeptide repeating unit (G-X-Y) are hydroxylated in some or all of the chains. Forms the fibrils of tendon, ligaments and bones. In bones, the fibrils are mineralized with calcium hydroxyapatite.

It is found in the secreted. Its subcellular location is the extracellular space. The protein resides in the extracellular matrix. In terms of biological role, type I collagen is a member of group I collagen (fibrillar forming collagen). The protein is Collagen alpha-1(I) chain of Macrauchenia sp.